The primary structure comprises 380 residues: Putative 8-amino-7-oxononanoate synthase (380 aa).

R18 provides a ligand contact to substrate. Pyridoxal 5'-phosphate is bound at residue 106-107 (GY). Residue H131 participates in substrate binding. Residues S179, 205–208 (DEAH), and 236–239 (TFGK) each bind pyridoxal 5'-phosphate. Position 239 is an N6-(pyridoxal phosphate)lysine (K239). T352 is a substrate binding site.

Belongs to the class-II pyridoxal-phosphate-dependent aminotransferase family. BioF subfamily. As to quaternary structure, homodimer. Pyridoxal 5'-phosphate is required as a cofactor.

The enzyme catalyses 6-carboxyhexanoyl-[ACP] + L-alanine + H(+) = (8S)-8-amino-7-oxononanoate + holo-[ACP] + CO2. It functions in the pathway cofactor biosynthesis; biotin biosynthesis. Catalyzes the decarboxylative condensation of pimeloyl-[acyl-carrier protein] and L-alanine to produce 8-amino-7-oxononanoate (AON), [acyl-carrier protein], and carbon dioxide. This Neisseria meningitidis serogroup C / serotype 2a (strain ATCC 700532 / DSM 15464 / FAM18) protein is Putative 8-amino-7-oxononanoate synthase (bioF).